The sequence spans 292 residues: High-affinity heme uptake system protein IsdE (292 aa).

Residues 1–19 (MRIIKYLTILVISVVILTS) form the signal peptide. Residue C20 is the site of N-palmitoyl cysteine attachment. C20 is lipidated: S-diacylglycerol cysteine. The Fe/B12 periplasmic-binding domain maps to 35–291 (RIVPTTVALT…QLYDLFYKDK (257 aa)). Heme contacts are provided by V41, A42, S60, Y61, M78, and H229.

It belongs to the bacterial solute-binding protein 8 family. It depends on heme b as a cofactor.

The protein resides in the cell membrane. Functionally, involved in heme (porphyrin) scavenging. Binds Fe(2+) and Fe(3+) heme but the largest fraction is Fe(2+) heme. Functions as a high-affinity heme binding protein and probably has a role in relaying heme-iron from cell wall-anchored isd proteins receptors to the probable permease IsdF. This is High-affinity heme uptake system protein IsdE (isdE) from Staphylococcus aureus (strain bovine RF122 / ET3-1).